A 2543-amino-acid chain; its full sequence is Highly reducing polyketide synthase PKS2 (2543 aa).

The Ketosynthase family 3 (KS3) domain maps to 4–425 (EPRIAVIGLS…GSNSAILLEG (422 aa)). Residues C174, H309, and H349 each act as for beta-ketoacyl synthase activity in the active site. Positions 573–902 (VFTGQGAQHA…TYLPTLFRGT (330 aa)) are malonyl-CoA:ACP transacylase (MAT) domain. The For malonyltransferase activity role is filled by S662. The segment at 969–1101 (HPLLGRKISP…GQIEAEMTDM (133 aa)) is N-terminal hotdog fold. A PKS/mFAS DH domain is found at 969 to 1281 (HPLLGRKISP…FRNIGSAEEV (313 aa)). A dehydratase (DH) domain region spans residues 969-1283 (HPLLGRKISP…NIGSAEEVID (315 aa)). The Proton acceptor; for dehydratase activity role is filled by H1001. Positions 1119–1281 (TGLKEHDINA…FRNIGSAEEV (163 aa)) are C-terminal hotdog fold. The active-site Proton donor; for dehydratase activity is the D1188. The tract at residues 1438–1631 (SKVLGYLTEY…LPSRYGTDKP (194 aa)) is methyltransferase (CMet) domain. An enoylreductase (ER) domain region spans residues 1847–2159 (GSPDTIYFQR…SGEHMGKMVI (313 aa)). A ketoreductase (KR) domain region spans residues 2184–2359 (ATYLVAGGTR…YTVSIALPVV (176 aa)). Residues 2463–2540 (DPLIGLTEAM…ALATEILSQR (78 aa)) form the Carrier domain. The residue at position 2500 (S2500) is an O-(pantetheine 4'-phosphoryl)serine.

The protein operates within secondary metabolite biosynthesis. Its function is as follows. Highly reducing polyketide synthase; part of the gene cluster that mediates the biosynthesis of phomenoic acid, a long chain aliphatic carboxylic acid that does not appear to be essential for pathogenicity but may play a role in allowing to outcompete other fungi in the environmental niche via its antifungal properties. The polyketide synthase produces the long methylated aliphatic carboxylic acid chain of phomenoic acid. The cluster-specific cytochrome P450 monooxygenase may then hydroxylate the methyl group of carbon 31. The putative dehydrogenase YogA, which has no obvious role in phomenoic acid biosynthesis, may further modify phomenoic acid to produce a compound not identified yet. The sequence is that of Highly reducing polyketide synthase PKS2 from Leptosphaeria maculans (strain JN3 / isolate v23.1.3 / race Av1-4-5-6-7-8) (Blackleg fungus).